We begin with the raw amino-acid sequence, 162 residues long: Interleukin-15 (162 aa).

The first 29 residues, 1–29, serve as a signal peptide directing secretion; sequence MRISKPHLRSISIQCYLCLLLKSHFLTEA. Positions 30–48 are excised as a propeptide; that stretch reads GIHVFILGCFSAGLPKTEA. 2 disulfides stabilise this stretch: cysteine 83/cysteine 133 and cysteine 90/cysteine 136. N-linked (GlcNAc...) asparagine glycosylation is present at asparagine 127.

This sequence belongs to the IL-15/IL-21 family.

The protein resides in the secreted. Functionally, cytokine that plays a major role in the development of inflammatory and protective immune responses to microbial invaders and parasites by modulating immune cells of both the innate and adaptive immune systems. Stimulates the proliferation of natural killer cells, T-cells and B-cells and promotes the secretion of several cytokines. In monocytes, induces the production of IL8 and monocyte chemotactic protein 1/CCL2, two chemokines that attract neutrophils and monocytes respectively to sites of infection. Unlike most cytokines, which are secreted in soluble form, IL15 is expressed in association with its high affinity IL15RA on the surface of IL15-producing cells and delivers signals to target cells that express IL2RB and IL2RG receptor subunits. Binding to its receptor triggers the phosphorylation of JAK1 and JAK3 and the recruitment and subsequent phosphorylation of signal transducer and activator of transcription-3/STAT3 and STAT5. In mast cells, induces the rapid tyrosine phosphorylation of STAT6 and thereby controls mast cell survival and release of cytokines such as IL4. The polypeptide is Interleukin-15 (IL15) (Chlorocebus aethiops (Green monkey)).